The primary structure comprises 959 residues: Vacuolar membrane protease (959 aa).

The Cytoplasmic segment spans residues 1 to 13 (MARLNPLSFTPGP). Residues 14 to 34 (VIFFTCAVYIALFAALLTVHL) form a helical membrane-spanning segment. Residues 35–378 (RVPDYPSKTP…KVFVVFQLHT (344 aa)) lie on the Vacuolar side of the membrane. Asparagine 48, asparagine 102, and asparagine 105 each carry an N-linked (GlcNAc...) asparagine glycan. The segment at 128 to 149 (GSEDDEPYHSPQSSPPGERRLD) is disordered. Histidine 158 and aspartate 170 together coordinate Zn(2+). Glutamate 204 acts as the Proton acceptor in catalysis. Residues glutamate 205, glutamate 230, and histidine 303 each coordinate Zn(2+). Residues 379–399 (MFALCVTLLVVAPLFLIGLTF) traverse the membrane as a helical segment. At 400–432 (GLSKADKNYLFARKAYMYSSDDDHPVHLYGWRG) the chain is on the cytoplasmic side. The chain crosses the membrane as a helical span at residues 433–453 (FFRFPIVFSIATAVVVGLAYL). At 454–463 (MVRLNPLILY) the chain is on the vacuolar side. Residues 464–484 (SSPYAVWSMMLSAWFSVAWFF) form a helical membrane-spanning segment. The Cytoplasmic portion of the chain corresponds to 485–498 (SRGASAMRPSALQR). A helical membrane pass occupies residues 499-519 (MYALIWLFAGSFALLAFVTVL). Topologically, residues 520-524 (SNNYQ) are vacuolar. The helical transmembrane segment at 525-545 (VAGGYFALFYFAGIFLALVLS) threads the bilayer. The Cytoplasmic segment spans residues 546-645 (YLELFFAPTK…YPGEQDWSGK (100 aa)). Disordered regions lie at residues 566–594 (DEPV…DATE) and 606–635 (FARH…LKQP). A compositionally biased stretch (basic and acidic residues) spans 612-626 (RRDSIDDENGNRDEE). The helical transmembrane segment at 646-666 (LPGWLWLLQLLLVAPIVVILV) threads the bilayer. Residues 667–688 (GQIALLLTSALHQTPADGNSSL) lie on the Vacuolar side of the membrane. Asparagine 685 carries N-linked (GlcNAc...) asparagine glycosylation. A helical transmembrane segment spans residues 689-709 (FVYLAFALLTTLLLAPIGPFI). At 710 to 716 (HRFTWHV) the chain is on the cytoplasmic side. A helical membrane pass occupies residues 717 to 737 (PTFVFLVCVATVIYNLVAFPF). At 738 to 959 (SREHRLKVYF…LVEGFKYFQV (222 aa)) the chain is on the vacuolar side. N-linked (GlcNAc...) asparagine glycosylation is found at asparagine 785, asparagine 818, asparagine 834, asparagine 864, and asparagine 899.

It belongs to the peptidase M28 family. The cofactor is Zn(2+).

It localises to the vacuole membrane. Functionally, may be involved in vacuolar sorting and osmoregulation. This chain is Vacuolar membrane protease, found in Phaeosphaeria nodorum (strain SN15 / ATCC MYA-4574 / FGSC 10173) (Glume blotch fungus).